Consider the following 316-residue polypeptide: Olfactory receptor 2K2 (316 aa).

Residues 1 to 20 (MQGENFTIWSIFFLEGFSQY) lie on the Extracellular side of the membrane. N-linked (GlcNAc...) asparagine glycosylation is present at N5. A helical transmembrane segment spans residues 21-41 (PGLEVVLFVFSLVMYLTTLLG). Topologically, residues 42–65 (NSTLILITILDSRLKTPMYLFLGN) are cytoplasmic. Residues 66–86 (LSFMDICYTSASVPTLLVNLL) form a helical membrane-spanning segment. Over 87-97 (SSQKTIIFSGC) the chain is Extracellular. An intrachain disulfide couples C97 to C188. Residues 98–118 (AVQMYLSLAMGSTECVLLAVM) traverse the membrane as a helical segment. The Cytoplasmic segment spans residues 119–143 (AYDRYVAICNPLRYSIIMNRCVCAR). The helical transmembrane segment at 144–164 (MATVSWVTGCLTALLETSFAL) threads the bilayer. The Extracellular portion of the chain corresponds to 165–199 (QIPLCGNLIDHFTCEILAVLKLACTSSLLMNTIML). Residues 200–220 (VVSILLLPIPMLLVCISYIFI) form a helical membrane-spanning segment. Residues 221 to 238 (LSTILRITSAEGRNKAFS) are Cytoplasmic-facing. Residues 239–259 (TCGAHLTVVILYYGAALSMYL) form a helical membrane-spanning segment. The Extracellular portion of the chain corresponds to 260 to 270 (KPSSSNAQKID). The chain crosses the membrane as a helical span at residues 271-291 (KIISLLYGVLTPMLNPIIYSL). The Cytoplasmic portion of the chain corresponds to 292–316 (RNKEVKDAMKKLLGKITLHQTHEHL).

The protein belongs to the G-protein coupled receptor 1 family.

It is found in the cell membrane. In terms of biological role, odorant receptor. The sequence is that of Olfactory receptor 2K2 (OR2K2) from Homo sapiens (Human).